The chain runs to 502 residues: Galactose/methyl galactoside import ATP-binding protein MglA (502 aa).

2 ABC transporter domains span residues 10–245 (LEMT…VGRE) and 255–502 (NTPK…SRYL). Position 42–49 (42–49 (GENGAGKS)) interacts with ATP.

Belongs to the ABC transporter superfamily. Galactose/methyl galactoside importer (TC 3.A.1.2.3) family. The complex is composed of one ATP-binding protein (MglA), two transmembrane proteins (MglC) and a solute-binding protein (MglB).

The protein resides in the cell inner membrane. It carries out the reaction D-galactose(out) + ATP + H2O = D-galactose(in) + ADP + phosphate + H(+). The enzyme catalyses methyl beta-D-galactoside(out) + ATP + H2O = methyl beta-D-galactoside(in) + ADP + phosphate + H(+). Its function is as follows. Part of the ABC transporter complex MglABC involved in galactose/methyl galactoside import. Responsible for energy coupling to the transport system. This Vibrio vulnificus (strain CMCP6) protein is Galactose/methyl galactoside import ATP-binding protein MglA.